An 85-amino-acid polypeptide reads, in one-letter code: Beta-insect depressant toxin BjIT2 (85 aa).

Residues 1 to 21 (MKLLLLLVISASMLLECLVNA) form the signal peptide. Residues 22 to 82 (DGYIRKKDGC…TWKSSTNTCG (61 aa)) form the LCN-type CS-alpha/beta domain. 4 cysteine pairs are disulfide-bonded: Cys-31–Cys-81, Cys-35–Cys-56, Cys-42–Cys-63, and Cys-46–Cys-65. The propeptide at 83 to 85 (RKK) is removed by a carboxypeptidase.

The protein belongs to the long (4 C-C) scorpion toxin superfamily. Sodium channel inhibitor family. Beta subfamily. C-terminal basic residues are removed by a carboxypeptidase. Expressed by the venom gland.

Its subcellular location is the secreted. In terms of biological role, depressant insect beta-toxins cause a transient contraction paralysis followed by a slow flaccid paralysis. They bind voltage-independently at site-4 of sodium channels (Nav) and shift the voltage of activation toward more negative potentials thereby affecting sodium channel activation and promoting spontaneous and repetitive firing. This toxin is active only on insects. In Hottentotta judaicus (Black scorpion), this protein is Beta-insect depressant toxin BjIT2.